The primary structure comprises 538 residues: Phosphoenolpyruvate carboxykinase (ATP) (538 aa).

Substrate contacts are provided by Arg-64, Tyr-205, and Lys-211. Residues Lys-211, His-230, and 246-254 (GLSGTGKTT) each bind ATP. Mn(2+) is bound by residues Lys-211 and His-230. Residue Asp-267 coordinates Mn(2+). Residues Glu-295, Arg-331, 447-448 (RI), and Thr-453 each bind ATP. Arg-331 is a binding site for substrate.

The protein belongs to the phosphoenolpyruvate carboxykinase (ATP) family. As to quaternary structure, monomer. Mn(2+) is required as a cofactor.

Its subcellular location is the cytoplasm. The enzyme catalyses oxaloacetate + ATP = phosphoenolpyruvate + ADP + CO2. It functions in the pathway carbohydrate biosynthesis; gluconeogenesis. Involved in the gluconeogenesis. Catalyzes the conversion of oxaloacetate (OAA) to phosphoenolpyruvate (PEP) through direct phosphoryl transfer between the nucleoside triphosphate and OAA. The protein is Phosphoenolpyruvate carboxykinase (ATP) of Baumannia cicadellinicola subsp. Homalodisca coagulata.